We begin with the raw amino-acid sequence, 628 residues long: EF-hand calcium-binding domain-containing protein 7 (628 aa).

Positions 1-22 (MASNPGSDAALGTQNPLLSGSP) are enriched in polar residues. Residues 1 to 24 (MASNPGSDAALGTQNPLLSGSPRT) are disordered. EF-hand domains are found at residues 102-137 (TSKAELLKSFKKLDVNDDGAILHSDLQKYLTKRGEK) and 138-173 (MTQEEVNAVINLADINANGKFDYVKFCKLYMTTSEQ). The tract at residues 192–231 (QFGSHMEGSPERGPSPAPKPSPRVIRKNDQETFSSKGDTS) is disordered. A phosphoserine mark is found at S200 and S212. Residues 222-231 (ETFSSKGDTS) show a composition bias toward polar residues. Residues 402–437 (EFRSTLSEIFEVIDLDGNGLISLEEYNFFELRTSGE) enclose the EF-hand 3 domain. Ca(2+) contacts are provided by D415, D417, N419, and E426.

As to quaternary structure, component of the EvC complex composed of EFCAB7, IQCE, EVC2 and EVC; built from two subcomplexes, EVC2:EVC and EFCAB7:IQCE. Interacts (via EF-hand 1 and 2) with IQCE (via N-terminus); this interaction anchors the EVC-EVC2 complex in a signaling microdomain at the base of cilia and stimulates the Hedgehog (Hh) pathway. Interacts with EVC2 (via N-terminal end). Interacts with EVC.

Its subcellular location is the cell projection. It is found in the cilium membrane. Component of the EvC complex that positively regulates ciliary Hedgehog (Hh) signaling. Required for the localization of the EVC2:EVC subcomplex at the base of primary cilia. The sequence is that of EF-hand calcium-binding domain-containing protein 7 (Efcab7) from Mus musculus (Mouse).